The primary structure comprises 490 residues: UDP-N-acetylmuramoyl-L-alanyl-D-glutamate--2,6-diaminopimelate ligase (490 aa).

UDP-N-acetyl-alpha-D-muramoyl-L-alanyl-D-glutamate is bound by residues L22, S24, and 39–41; that span reads HQT. 111-117 lines the ATP pocket; the sequence is GTNGKTT. Residues N152, 153–154, S180, Q186, and R188 contribute to the UDP-N-acetyl-alpha-D-muramoyl-L-alanyl-D-glutamate site; that span reads TT. The residue at position 220 (K220) is an N6-carboxylysine. Residues R385, 409 to 412, G460, and E464 each bind meso-2,6-diaminopimelate; that span reads DNPR. Positions 409–412 match the Meso-diaminopimelate recognition motif motif; sequence DNPR.

This sequence belongs to the MurCDEF family. MurE subfamily. Mg(2+) is required as a cofactor. In terms of processing, carboxylation is probably crucial for Mg(2+) binding and, consequently, for the gamma-phosphate positioning of ATP.

It localises to the cytoplasm. It carries out the reaction UDP-N-acetyl-alpha-D-muramoyl-L-alanyl-D-glutamate + meso-2,6-diaminopimelate + ATP = UDP-N-acetyl-alpha-D-muramoyl-L-alanyl-gamma-D-glutamyl-meso-2,6-diaminopimelate + ADP + phosphate + H(+). The protein operates within cell wall biogenesis; peptidoglycan biosynthesis. In terms of biological role, catalyzes the addition of meso-diaminopimelic acid to the nucleotide precursor UDP-N-acetylmuramoyl-L-alanyl-D-glutamate (UMAG) in the biosynthesis of bacterial cell-wall peptidoglycan. The polypeptide is UDP-N-acetylmuramoyl-L-alanyl-D-glutamate--2,6-diaminopimelate ligase (Yersinia pestis).